The primary structure comprises 188 residues: dCTP deaminase (188 aa).

Residues 111–116, 135–137, Q156, Y170, and Q180 each bind dCTP; these read KSTYAR and TLE. The active-site Proton donor/acceptor is E137.

It belongs to the dCTP deaminase family. Homotrimer.

It catalyses the reaction dCTP + H2O + H(+) = dUTP + NH4(+). The protein operates within pyrimidine metabolism; dUMP biosynthesis; dUMP from dCTP (dUTP route): step 1/2. Its function is as follows. Catalyzes the deamination of dCTP to dUTP. The polypeptide is dCTP deaminase (Ralstonia pickettii (strain 12J)).